A 101-amino-acid polypeptide reads, in one-letter code: NAD(P)H-quinone oxidoreductase subunit 4L, chloroplastic (101 aa).

The next 3 membrane-spanning stretches (helical) occupy residues 2–22, 32–52, and 61–81; these read IFEH…YGLI, MCLE…SDFF, and IFSI…PAIV.

It belongs to the complex I subunit 4L family. As to quaternary structure, NDH is composed of at least 16 different subunits, 5 of which are encoded in the nucleus.

It is found in the plastid. The protein resides in the chloroplast thylakoid membrane. It carries out the reaction a plastoquinone + NADH + (n+1) H(+)(in) = a plastoquinol + NAD(+) + n H(+)(out). It catalyses the reaction a plastoquinone + NADPH + (n+1) H(+)(in) = a plastoquinol + NADP(+) + n H(+)(out). Functionally, NDH shuttles electrons from NAD(P)H:plastoquinone, via FMN and iron-sulfur (Fe-S) centers, to quinones in the photosynthetic chain and possibly in a chloroplast respiratory chain. The immediate electron acceptor for the enzyme in this species is believed to be plastoquinone. Couples the redox reaction to proton translocation, and thus conserves the redox energy in a proton gradient. This chain is NAD(P)H-quinone oxidoreductase subunit 4L, chloroplastic, found in Phaseolus vulgaris (Kidney bean).